The following is a 140-amino-acid chain: Large ribosomal subunit protein uL16c (140 aa).

The protein belongs to the universal ribosomal protein uL16 family. Part of the 50S ribosomal subunit.

It localises to the plastid. Its subcellular location is the chloroplast. The protein is Large ribosomal subunit protein uL16c of Psilotum nudum (Whisk fern).